The primary structure comprises 379 residues: Homoserine O-acetyltransferase (379 aa).

An AB hydrolase-1 domain is found at 54–332; that stretch reads NAILVCHALS…PYQSEEIVKS (279 aa). The active-site Nucleophile is the Ser-159. Residue Arg-228 participates in substrate binding. Catalysis depends on residues Asp-318 and His-352. Substrate is bound at residue Asp-353.

The protein belongs to the AB hydrolase superfamily. MetX family. In terms of assembly, homodimer.

Its subcellular location is the cytoplasm. It carries out the reaction L-homoserine + acetyl-CoA = O-acetyl-L-homoserine + CoA. It participates in amino-acid biosynthesis; L-methionine biosynthesis via de novo pathway; O-acetyl-L-homoserine from L-homoserine: step 1/1. In terms of biological role, transfers an acetyl group from acetyl-CoA to L-homoserine, forming acetyl-L-homoserine. The sequence is that of Homoserine O-acetyltransferase from Leptospira meyeri.